The following is a 176-amino-acid chain: ATP-dependent protease subunit HslV (176 aa).

Thr-5 is an active-site residue. Residues Ala-161, Cys-164, and Thr-167 each coordinate Na(+).

It belongs to the peptidase T1B family. HslV subfamily. As to quaternary structure, a double ring-shaped homohexamer of HslV is capped on each side by a ring-shaped HslU homohexamer. The assembly of the HslU/HslV complex is dependent on binding of ATP.

It is found in the cytoplasm. It catalyses the reaction ATP-dependent cleavage of peptide bonds with broad specificity.. With respect to regulation, allosterically activated by HslU binding. In terms of biological role, protease subunit of a proteasome-like degradation complex believed to be a general protein degrading machinery. This is ATP-dependent protease subunit HslV from Caldicellulosiruptor saccharolyticus (strain ATCC 43494 / DSM 8903 / Tp8T 6331).